The sequence spans 312 residues: 1-(5-phosphoribosyl)-5-[(5-phosphoribosylamino)methylideneamino] imidazole-4-carboxamide isomerase HISN3, chloroplastic (312 aa).

The N-terminal 67 residues, 1–67, are a transit peptide targeting the chloroplast; the sequence is MRSPASTPSI…IHKGKVKQIV (67 aa). D57 is a binding site for 1-(5-phospho-beta-D-ribosyl)-5-[(5-phospho-beta-D-ribosylamino)methylideneamino]imidazole-4-carboxamide. Q65 contacts 5-[(5-phospho-1-deoxy-D-ribulos-1-ylimino)methylamino]-1-(5-phospho-beta-D-ribosyl)imidazole-4-carboxamide. Residues Q65 and I66 each contribute to the Na(+) site. Position 68 (G68) interacts with 1-(5-phospho-beta-D-ribosyl)-5-[(5-phospho-beta-D-ribosylamino)methylideneamino]imidazole-4-carboxamide. H108, G138, T158, and S159 together coordinate 5-[(5-phospho-1-deoxy-D-ribulos-1-ylimino)methylamino]-1-(5-phospho-beta-D-ribosyl)imidazole-4-carboxamide. 1-(5-phospho-beta-D-ribosyl)-5-[(5-phospho-beta-D-ribosylamino)methylideneamino]imidazole-4-carboxamide is bound by residues G138, T158, and S159. The Na(+) site is built by S159 and F162. Residues D187, R203, W204, and H230 each coordinate 1-(5-phospho-beta-D-ribosyl)-5-[(5-phospho-beta-D-ribosylamino)methylideneamino]imidazole-4-carboxamide. D187 is a 5-[(5-phospho-1-deoxy-D-ribulos-1-ylimino)methylamino]-1-(5-phospho-beta-D-ribosyl)imidazole-4-carboxamide binding site. W204 is a 5-[(5-phospho-1-deoxy-D-ribulos-1-ylimino)methylamino]-1-(5-phospho-beta-D-ribosyl)imidazole-4-carboxamide binding site. E235 is a binding site for Na(+). 4 residues coordinate 1-(5-phospho-beta-D-ribosyl)-5-[(5-phospho-beta-D-ribosylamino)methylideneamino]imidazole-4-carboxamide: G236, G262, G285, and S286. 5-[(5-phospho-1-deoxy-D-ribulos-1-ylimino)methylamino]-1-(5-phospho-beta-D-ribosyl)imidazole-4-carboxamide-binding residues include G236, G262, G285, and S286.

Belongs to the HisA/HisF family. The cofactor is Na(+).

The protein resides in the plastid. It localises to the chloroplast. It catalyses the reaction 1-(5-phospho-beta-D-ribosyl)-5-[(5-phospho-beta-D-ribosylamino)methylideneamino]imidazole-4-carboxamide = 5-[(5-phospho-1-deoxy-D-ribulos-1-ylimino)methylamino]-1-(5-phospho-beta-D-ribosyl)imidazole-4-carboxamide. It participates in amino-acid biosynthesis; L-histidine biosynthesis; L-histidine from 5-phospho-alpha-D-ribose 1-diphosphate: step 4/9. Functionally, component of the histidine biosynthesis pathway that catalyzes the isomerization of 5'-ProFAR (pro-phosphoribosyl formimino-5-aminoimidazole-4-carboxamide ribonucleotide, referred as 1-(5-phospho-beta-D-ribosyl)-5-[(5-phospho-beta-D-ribosylamino)methylideneamino]imidazole-4-carboxamide) to PrFAR (phosphoribulosyl formimino-5-aminoimidazole-4-carboxamide ribonucleotide, referred as 5-[(5-phospho-1-deoxy-D-ribulos-1-ylimino)methylamino]-1-(5-phospho-beta-D-ribosyl)imidazole-4-carboxamide). In Medicago truncatula (Barrel medic), this protein is 1-(5-phosphoribosyl)-5-[(5-phosphoribosylamino)methylideneamino] imidazole-4-carboxamide isomerase HISN3, chloroplastic.